The chain runs to 1202 residues: Nitric oxide synthase 3 (1202 aa).

The interval 1 to 70 is disordered; it reads MGNLKSVGQE…PPDGPKFPRV (70 aa). The N-myristoyl glycine moiety is linked to residue Gly2. S-palmitoyl cysteine attachment occurs at residues Cys15 and Cys26. Positions 15–27 are enriched in gly residues; sequence CGLGLGLGLGLCG. A compositionally biased stretch (pro residues) spans 33-65; sequence SPAPEPSQAPVPPSPTRPAPDHSPPLTRPPDGP. Cys93 and Cys98 together coordinate Zn(2+). The interaction with NOSIP stretch occupies residues 97 to 485; that stretch reads RCLGSLVFPR…PDPWKGSAAK (389 aa). Ser101 provides a ligand contact to (6R)-L-erythro-5,6,7,8-tetrahydrobiopterin. Cys183 contributes to the heme b binding site. L-arginine-binding residues include Gln246, Trp355, Tyr356, and Glu360. Positions 445, 446, and 459 each coordinate (6R)-L-erythro-5,6,7,8-tetrahydrobiopterin. A heme b-binding site is contributed by Tyr474. Positions 489–509 are calmodulin-binding; that stretch reads ITRKKTFKEVANAVKISASLM. Thr494 is modified (phosphothreonine; by AMPK). Residues 519–702 enclose the Flavodoxin-like domain; it reads ATILYGSETG…AFRGWAQAAF (184 aa). Residues Ser525, Glu526, Thr527, Arg529, Ser571, and Thr572 each coordinate FMN. Ser614, Ser632, and Ser637 each carry phosphoserine. Residues Ser653, Cys660, Glu686, and Gln690 each coordinate FMN. The FAD-binding FR-type domain occupies 755-1001; sequence RKMFQATILS…IRGAPSFRLP (247 aa). Arg775 lines the NADP(+) pocket. His797 contacts FAD. The tract at residues 817-843 is disordered; it reads EDPPPSTEPVAVEQLEKGSPGGPPPGW. At Ser835 the chain carries Phosphoserine. The FAD site is built by Arg937, Tyr939, Ser940, Thr955, Ala957, Tyr961, Val974, Cys975, and Ser976. Thr1015, Arg1048, Ser1077, Arg1078, Lys1084, Tyr1086, and Gln1088 together coordinate NADP(+). The residue at position 1174 (Thr1174) is a Phosphothreonine. Phosphoserine; by AMPK is present on Ser1176. Ser1178 carries the phosphoserine modification.

It belongs to the NOS family. In terms of assembly, homodimer. Interacts with NOSIP and NOSTRIN. Interacts with HSP90AB1. Forms a complex with ASL, ASS1 and SLC7A1; the complex regulates cell-autonomous L-arginine synthesis and citrulline recycling while channeling extracellular L-arginine to nitric oxide synthesis pathway. The cofactor is heme b. FAD is required as a cofactor. Requires FMN as cofactor. It depends on (6R)-L-erythro-5,6,7,8-tetrahydrobiopterin as a cofactor. Phosphorylation by AMPK at Ser-1176 in the presence of Ca(2+)-calmodulin (CaM) activates activity. In absence of Ca(2+)-calmodulin, AMPK also phosphorylates Thr-494, resulting in inhibition of activity. Expressed constitutively by vascular endothelium. Detected in alveolar and serosal epithelial cells as well as in endothelial cells in one day old rat. In adult lung, detected in rare endothelial cells.

The protein localises to the membrane. Its subcellular location is the caveola. The protein resides in the cytoplasm. It localises to the cytoskeleton. It is found in the golgi apparatus. The protein localises to the cell membrane. The catalysed reaction is 2 L-arginine + 3 NADPH + 4 O2 + H(+) = 2 L-citrulline + 2 nitric oxide + 3 NADP(+) + 4 H2O. With respect to regulation, stimulated by calcium/calmodulin. Inhibited by NOSIP and NOSTRIN. Its function is as follows. Produces nitric oxide (NO) which is implicated in vascular smooth muscle relaxation through a cGMP-mediated signal transduction pathway. NO mediates vascular endothelial growth factor (VEGF)-induced angiogenesis in coronary vessels and promotes blood clotting through the activation of platelets. The sequence is that of Nitric oxide synthase 3 from Rattus norvegicus (Rat).